Here is a 293-residue protein sequence, read N- to C-terminus: AKT-interacting protein homolog A (293 aa).

Polar residues predominate over residues 1 to 11 (MNPFWNMSSAS). Residues 1-45 (MNPFWNMSSASVRKRSENDEKISTGDQKISPPRSSSAKKQLPPIP) are disordered. The span at 14-23 (KRSENDEKIS) shows a compositional bias: basic and acidic residues. Residues 24–38 (TGDQKISPPRSSSAK) are compositionally biased toward polar residues. Residues 75-223 (YLEYSLLAEF…VVDSVKLCNS (149 aa)) form the UBC core domain. Residues 256–266 (AQKKKSEEQSK) are compositionally biased toward basic and acidic residues. Residues 256–293 (AQKKKSEEQSKGLHVSGLSWVKPGSVLPFSKEENSLQT) form a disordered region.

The protein belongs to the ubiquitin-conjugating enzyme family. FTS subfamily.

It is found in the cytoplasm. The protein resides in the cell membrane. Functionally, may function to promote vesicle trafficking and/or fusion. May also regulate apoptosis. In Xenopus laevis (African clawed frog), this protein is AKT-interacting protein homolog A (aktip-a).